The following is a 388-amino-acid chain: Trans-enoyl reductase tenC (388 aa).

Position 51–54 (51–54 (VDGK)) interacts with NADP(+). 142–149 (VGIASVGM) is a substrate binding site. NADP(+)-binding positions include 219–222 (SSES), Tyr237, and 284–285 (LD). 304–308 (SFTQF) provides a ligand contact to substrate. 373–374 (IK) is an NADP(+) binding site.

Belongs to the zinc-containing alcohol dehydrogenase family. As to quaternary structure, monomer.

It participates in secondary metabolite biosynthesis. Functionally, trans-enoyl reductase; part of the gene cluster that mediates the biosynthesis of tenellin-type 2-pyridones, iron-chelating compounds involved in iron stress tolerance, competition with the natural competitor fungus Metarhizium robertsii and insect hosts infection. TenC collaborates with the hybrid PKS-NRPS synthetase tenS to catalyze the assembly of the polyketide-amino acid backbone, since tenS lacks a designated enoylreductase (ER) domain. Upon formation of the polyketide backbone on the thiotemplate of tenS, the triketide is transferred to the NRPS module and linked to tyrosine to produce the pyrrolidine-2-dione intermediates, including pretellinin A, 11-hydropretellenin A, 12-hydropretellenin A, 13-hydropretellenin A, 14-hydropretellenin A, 12-oxopretellenin A and prototellinin D. The pathway begins with the assembly of the polyketide-amino acid backbone by the hybrid PKS-NRPS tenS with the help of the enoyl reductase tenC. These enzymes catalyze the synthesis of the pyrrolidine-2-dione intermediates pretellinin A, 11-hydropretellenin A, 12-hydropretellenin A, 13-hydropretellenin A, 14-hydropretellenin A, 12-oxopretellenin A and prototellinin D. The cytochrome P450 monooxygenase tenA then catalyzes an oxidative ring expansion of pretenellin A and 14-hydropretellenin A to form the 2-pyridone core, leading to pretenellin B and pyridovericin, respectively. The cytochrome P450 monooxygenase tenB is then required for the selective N-hydroxylation of the 2-pyridone nitrogen of yield tellinin and 15-hydroxytellenin (15-HT), respectively. The UDP-glucosyltransferase GT1 and the methyltransferase MT1, located outside the tenS gene cluster, contribute to the stepwise glycosylation and methylation of 15-HT to obtain the glycoside pyridovericin-N-O-(4-O-methyl-beta-D-glucopyranoside) (PMGP). Additional related compounds such as 1-O-methyl-15-HT, (8Z)-1-O-methyl-15-HT, and O-methyltenellin A are also produced but the enzymes involved in their biosynthesis have still to be determined. The protein is Trans-enoyl reductase tenC of Beauveria bassiana (strain ARSEF 2860) (White muscardine disease fungus).